The sequence spans 81 residues: MASNEEILAGLAEIVNEETGLATEAVELDKSFTEDLDIDSISMMTIVVNAEEKFGVRIPDEEVKNLKTVGDAVSFIANAQA.

A Carrier domain is found at 2–80; it reads ASNEEILAGL…DAVSFIANAQ (79 aa). Serine 40 carries the post-translational modification O-(pantetheine 4'-phosphoryl)serine.

It belongs to the acyl carrier protein (ACP) family. 4'-phosphopantetheine is transferred from CoA to a specific serine of apo-ACP by AcpS. This modification is essential for activity because fatty acids are bound in thioester linkage to the sulfhydryl of the prosthetic group.

It is found in the cytoplasm. It functions in the pathway lipid metabolism; fatty acid biosynthesis. Its function is as follows. Carrier of the growing fatty acid chain in fatty acid biosynthesis. The chain is Acyl carrier protein from Paenarthrobacter aurescens (strain TC1).